A 621-amino-acid polypeptide reads, in one-letter code: MTQEKKKFDAEVGKILNLMIHSLYSNKEIFMRELISNASDACDKLRYLSQSHSELVASDSNFKITVKVDKDNWQIIIRDNGIGMNKEDLIDNLGTIARSGTANFLKSLSGDSKKDNMLIGQFGVGFYSSFMVADKVTVTSRKAGEDTVHVWESDGLGEYIVSDSDKEFTRGTEIILHIKKEEDIFLDHFRLKHIVKSYSDHVAVPIYFFDEAGNNEIQLNSASALWTRPKSEITEEQYKEFYKSLSYAVDDPWITMHNKNEGAIEFTNLLFIPSSKTFDLFHPDRKRRVKLYIKRVFISDENIDLIPSYLRFLRGVVDSEDLPLNISRESLQHNSVLEKIKNAITKRVLGELRKKKEESSEEYNKFWANFGGALKEGLCEATTDHEKLLEVCIFRSALHNKMISLDEYIAGFKEEQNTIYYLSGDNPDKLLSSPQIEGLLSKNIDVLLFTDTVDDFWVNVNSEYKGHAIKSATRSDIDVEQTTSQSEDKNTHSKKSDDEYKLLTDYFKETLGKLVKEVKISKKLTSSPACLAVSDSAMDIRMERFLIEQKQITAASAKNLELNPKNKIIEKIFNDLKANNKNNEELVNLIFDQACILEGEPVADTGAFSKRLNDIVQKAIL.

The a; substrate-binding stretch occupies residues 1 to 328 (MTQEKKKFDA…SEDLPLNISR (328 aa)). Residues 329–544 (ESLQHNSVLE…DSAMDIRMER (216 aa)) form a b region. A disordered region spans residues 475 to 495 (SDIDVEQTTSQSEDKNTHSKK). Residues 486 to 495 (SEDKNTHSKK) show a composition bias toward basic and acidic residues. The tract at residues 545–621 (FLIEQKQITA…LNDIVQKAIL (77 aa)) is c.

Belongs to the heat shock protein 90 family. In terms of assembly, homodimer.

It is found in the cytoplasm. Its function is as follows. Molecular chaperone. Has ATPase activity. The polypeptide is Chaperone protein HtpG (Rickettsia akari (strain Hartford)).